The primary structure comprises 372 residues: Bifunctional coenzyme PQQ synthesis protein C/D (372 aa).

A pqqC region spans residues 1–267 (MTAQFPPPVP…VAETNSAEDS (267 aa)). Residues 260-288 (ETNSAEDSPAAAASPAATTAEPTAFSGSD) are disordered. Over residues 264-283 (AEDSPAAAASPAATTAEPTA) the composition is skewed to low complexity. A linker region spans residues 268-280 (PAAAASPAATTAE). The segment at 281 to 372 (PTAFSGSDVP…GLAQKRVLER (92 aa)) is pqqD.

The protein in the N-terminal section; belongs to the PqqC family. This sequence in the C-terminal section; belongs to the PqqD family. Monomer. Interacts with PqqE.

The enzyme catalyses 6-(2-amino-2-carboxyethyl)-7,8-dioxo-1,2,3,4,7,8-hexahydroquinoline-2,4-dicarboxylate + 3 O2 = pyrroloquinoline quinone + 2 H2O2 + 2 H2O + H(+). Its pathway is cofactor biosynthesis; pyrroloquinoline quinone biosynthesis. In terms of biological role, the PqqC region is involved in ring cyclization and eight-electron oxidation of 3a-(2-amino-2-carboxyethyl)-4,5-dioxo-4,5,6,7,8,9-hexahydroquinoline-7,9-dicarboxylic-acid to PQQ. Its function is as follows. The PqqD region functions as a PqqA binding domain and presents PqqA to PqqE. This chain is Bifunctional coenzyme PQQ synthesis protein C/D (pqqCD), found in Methylorubrum extorquens (strain ATCC 14718 / DSM 1338 / JCM 2805 / NCIMB 9133 / AM1) (Methylobacterium extorquens).